The following is an 867-amino-acid chain: Bifunctional diterpene synthase, chloroplastic (867 aa).

A chloroplast-targeting transit peptide spans 1–55; it reads MAKVLFSSFQQTGISGSLKSGQLSGVFINGTNLKSNAHAKRFRKNSTSSITIRCC. A substrate-binding site is contributed by Lys-255. Asp-389 and Asp-391 together coordinate Mg(2+). The short motif at 389–392 is the DXDD motif element; that stretch reads DIDD. Lys-474 lines the substrate pocket. Positions 611, 615, 758, 762, and 766 each coordinate Mg(2+). The DDXXD motif signature appears at 611–615; it reads DDLMD.

The protein belongs to the terpene synthase family. Mg(2+) serves as cofactor.

Its subcellular location is the plastid. It localises to the chloroplast. The catalysed reaction is (+)-copalyl diphosphate = miltiradiene + diphosphate. It carries out the reaction (2E,6E,10E)-geranylgeranyl diphosphate = (+)-copalyl diphosphate. Its pathway is secondary metabolite biosynthesis; terpenoid biosynthesis. Bifunctional diterpene cyclase that catalyzes the successive two-step type-B (protonation-initiated cyclization) and type-A (ionization-initiated cyclization) reactions of geranylgeranyl diphosphate (GGDP) producing successively (+)-copalyl diphosphate and miltiradiene. This Selaginella moellendorffii (Spikemoss) protein is Bifunctional diterpene synthase, chloroplastic (MDS).